The following is a 61-amino-acid chain: Transcription elongation factor Spt4 (61 aa).

Cys6, Cys9, Cys18, and Cys21 together coordinate Zn(2+).

The protein belongs to the archaeal Spt4 family. As to quaternary structure, heterodimer composed of Spt4 and Spt5.

Its function is as follows. Stimulates transcription elongation. This chain is Transcription elongation factor Spt4, found in Pyrococcus furiosus (strain ATCC 43587 / DSM 3638 / JCM 8422 / Vc1).